Reading from the N-terminus, the 1158-residue chain is MVSSLARYAFNIYGDTRPRERPRRLEYPCERELTCLSQLQRPGQPPVVILGGKNCLRMLALNADNTAVVADSSIVDSARTPQKLFSVNTLKCTSDLVACGLANGTVQVYQVTSGGKNRLAYKLQDHKRVVNSLDFVDDSVLVSGSQDGTVKVWDLRTFSPRPVMQLAASHHSDPVRSCQASAHCRVRGKTTVLSVHDSGALCKFDLRATAGVGAGVGAGAGAGALLPERKWTFHSGPALSLHIHPDAEYVLTGGRDRKICVWHYGEAGSHSVAPLSIVNTYGPVMKVRWCTVAAQDPVEPTLDLPDAPDPSCLYNYDFACSYLNDDATISVYNLRRRYIPKAVVASPMRKPVQNFVWVASRTDRRLFSISKANVLVAHDLDVNDVDITRPLDNMPAVATAWRPGYANVSIVSQHKNDFELGDPVADSRDTSFDDTRDDLSHSRSTPPKERPPIVRQSTQFTVASLKSQSPVLHQRGMDSSVRDSSARAMDLSGRGLDLPPPVRPSLPRNPSQSTQGSQSSGAAHSKSLPHAPSPYVAALSVPIPLADDTVFDILAAEYHISVPDGFSLLDVCQMNARVAASVSRYRDCEIWRMLGVSLEQEFEEHQFDDPRFDGQFEDQHTDPQNASGSQHSEKDIDTKSVSSYLGNFVGSFNSNSTSTTNYGGPHRSDSATSMNKALFGSKEREGKEGKDIKHGKREKEIEQGLESPKELNPLSTRRKDSDSKANNADSSALDKPGDKSLDRSALDRSAPTSFRNKSLLQTSDGETPKDNNLSDEIHAYEPRNNLSTKVSLSTMSSQKSKAIDIKAPRRYSNNAMSASMSPEIFASSESPLKHIAKLSPSRSQTGHSWSIPSSSHDLDDENMPASVSGSLASSGYMGGPDSRSGITGTSFHSNPRSHPSFSSHRSSLTSGRSSFVTNRSGFYSSQVQPAPQLLEKVEEFSISSAEPKTSELTKAMRKKKFSYEELESSEANEKPWSLINLLEKAVIYARDQGDLVMCCTLILLFHDLFKKIFSNRILSDNACLECLALYVDTLRGKCLFTTAVNVVKEAPSSLNYKLAVYASKDVDMRYYCCWCEKLLVNETSKAKFGPNSENFGYWYCDSCSRRQSNCIYCGEPCRGLTVVVSLNCGHRGHFGCLQEWFLDEQSTGCPGGCEYVMD.

WD repeat units lie at residues 80–119 (TPQK…KNRL), 125–163 (DHKR…PRPV), 170–214 (HHSD…GVGA), 233–272 (FHSG…SHSV), and 293–342 (AAQD…IPKA). Disordered regions lie at residues 421 to 529 (GDPV…KSLP), 610 to 637 (PRFD…KDID), 678 to 808 (LFGS…IKAP), and 837 to 909 (KLSP…SSLT). Residues 425–452 (ADSRDTSFDDTRDDLSHSRSTPPKERPP) show a composition bias toward basic and acidic residues. Positions 455-471 (RQSTQFTVASLKSQSPV) are enriched in polar residues. The span at 505 to 526 (SLPRNPSQSTQGSQSSGAAHSK) shows a compositional bias: low complexity. Basic and acidic residues-rich tracts occupy residues 610-621 (PRFDGQFEDQHT), 681-702 (SKER…KEIE), and 735-746 (KPGDKSLDRSAL). Composition is skewed to polar residues over residues 750–765 (APTS…TSDG), 784–800 (NNLS…SQKS), and 840–855 (PSRS…PSSS). Residues 890–909 (SFHSNPRSHPSFSSHRSSLT) show a composition bias toward low complexity. Residues 1110 to 1153 (CIYCGEPCRGLTVVVSLNCGHRGHFGCLQEWFLDEQSTGCPGGC) form an RING-type; degenerate zinc finger.

Belongs to the WD repeat RTC1 family.

The protein localises to the vacuole. Its function is as follows. May be involved in a process influencing telomere capping. This is Restriction of telomere capping protein 1 (RTC1) from Clavispora lusitaniae (strain ATCC 42720) (Yeast).